The sequence spans 629 residues: MMDSFAQDWPTLTHTDNGLAMDQLSGVVGGGDLPGDVGFEPQTRARSNTWPCPRPENFVEQADELDSTKASNQQLADSQQAIQNANAAKKNSSRRNAWGNLSYADLITHAIGSATDKRLTLSQIYEWMVQNVPYFKDKGDSNSSAGWKNSIRHNLSLHNRFMRVQNEGTGKSSWWMLNPEAKPGKSVRRRAASMETSRYEKRRGRAKKRVEALRQAGVVGLNDATPSPSSSVSEGLDHFPESPLHSGGGFQLSPDFRQRASSNASSCGRLSPIRAQDLEPQDLWGFPVDYQNTTMTQAHAQALEELTGSMADELTLCNQQQQQFSAASGLPSQPPPPPYQPPQLQQQQQQQPSYSLNGPAPGGYQTLQPQSQSQCLLHRSLNCSCLHNARDGLSPNSVTTTMSPAYPNSEPSSDSLNTYSNVVLDGSSDLLVQQQQQQQLQQQQVKVEFEGQCLEVLNNEAQPIDEFNLENFPVGNLECNVEELLQQEMSYDGLLDINIPLANVSTNAPLVSLVNNSTTLSSSSSNLSGSTTTLSSSSLSAAVQLNQLQAQLQQQQQQQQQQQHLQQQQQQHHQHQQQLLLNNNNNNNNNNSSNSSLDLATQTAATNLNAARVQYSQPSVVTSPPSWVH.

A Phosphothreonine; by PKB/AKT1 modification is found at T49. S78 carries the post-translational modification Phosphoserine. Residues 98–204 (WGNLSYADLI…ETSRYEKRRG (107 aa)) constitute a DNA-binding region (fork-head). 5 disordered regions span residues 185–208 (KSVRRRAASMETSRYEKRRGRAKK), 220–274 (GLND…SPIR), 321–368 (QQQF…QTLQ), 394–417 (SPNSVTTTMSPAYPNSEPSSDSLN), and 563–597 (QHLQQQQQQHHQHQQQLLLNNNNNNNNNNSSNSSL). S193 bears the Phosphoserine; by PKB/AKT1 mark. 2 stretches are compositionally biased toward polar residues: residues 224–233 (ATPSPSSSVS) and 259–268 (RASSNASSCG). S262 bears the Phosphoserine; by PKB/AKT1 mark. Residues S265, S266, and S271 each carry the phosphoserine modification. Residues 332 to 341 (SQPPPPPYQP) show a composition bias toward pro residues. A compositionally biased stretch (low complexity) spans 342–356 (PQLQQQQQQQPSYSL). Residues 394–403 (SPNSVTTTMS) show a composition bias toward polar residues.

As to quaternary structure, interacts with melt.

Its subcellular location is the cytoplasm. It is found in the nucleus. Transcription factor involved in the regulation of the insulin signaling pathway. Consistently activates both the downstream target Thor\d4EBP and the feedback control target InR. Involved in negative regulation of the cell cycle, modulating cell growth and proliferation. In response to cellular stresses, such as nutrient deprivation or increased levels of reactive oxygen species, foxo is activated and inhibits growth through the action of target genes such as Thor. Foxo activated in the adult fat body can regulate lifespan in adults; an insulin peptide itself may function as one secondary messenger of insulin-regulated aging. Also regulates Lip4, homolog of human acid lipases, thereby acting as a key modulator of lipid metabolism by insulin signaling and integrates insulin responses to glucose and lipid homeostasis. The protein is Forkhead box protein O of Drosophila persimilis (Fruit fly).